The chain runs to 572 residues: 2-hydroxyacyl-CoA lyase (572 aa).

Position 2 is an N-acetylalanine (Ala2). Glu58 is a binding site for thiamine diphosphate. Residues 407–488 form a thiamine pyrophosphate binding region; the sequence is TMDVGRSVLV…IIVFNNGGVY (82 aa). Mg(2+)-binding residues include Asp457 and Asn484.

This sequence belongs to the TPP enzyme family. As to quaternary structure, homotetramer. The cofactor is Mg(2+). Thiamine diphosphate is required as a cofactor.

It carries out the reaction an (R)-2-hydroxy-long-chain-fatty acyl-CoA = a long-chain fatty aldehyde + formyl-CoA. The catalysed reaction is a 2-hydroxy-3-methyl fatty acyl-CoA = a 2-methyl-branched fatty aldehyde + formyl-CoA. Its function is as follows. Catalyzes a carbon-carbon cleavage reaction; cleaves a 2-hydroxy-3-methylacyl-CoA into formyl-CoA and a 2-methyl-branched fatty aldehyde. The polypeptide is 2-hydroxyacyl-CoA lyase (HACL) (Arabidopsis thaliana (Mouse-ear cress)).